Reading from the N-terminus, the 154-residue chain is Myoglobin (154 aa).

The Globin domain occupies 2 to 148; it reads GLSDGEWELV…FRNDIAAKYK (147 aa). The residue at position 4 (Ser4) is a Phosphoserine. A Phosphothreonine modification is found at Thr68. A heme b-binding site is contributed by His94.

The protein belongs to the globin family. As to quaternary structure, monomeric.

It localises to the cytoplasm. The protein resides in the sarcoplasm. It catalyses the reaction Fe(III)-heme b-[protein] + nitric oxide + H2O = Fe(II)-heme b-[protein] + nitrite + 2 H(+). It carries out the reaction H2O2 + AH2 = A + 2 H2O. Functionally, monomeric heme protein which primary function is to store oxygen and facilitate its diffusion within muscle tissues. Reversibly binds oxygen through a pentacoordinated heme iron and enables its timely and efficient release as needed during periods of heightened demand. Depending on the oxidative conditions of tissues and cells, and in addition to its ability to bind oxygen, it also has a nitrite reductase activity whereby it regulates the production of bioactive nitric oxide. Under stress conditions, like hypoxia and anoxia, it also protects cells against reactive oxygen species thanks to its pseudoperoxidase activity. The sequence is that of Myoglobin (MB) from Elephas maximus (Indian elephant).